Here is a 1134-residue protein sequence, read N- to C-terminus: Centrosomal protein of 131 kDa (1134 aa).

Disordered regions lie at residues 111 to 131 (NSSESDYSLHKRTPDSSEEGE), 168 to 208 (DLPG…PLTL), 286 to 306 (ESSKQVEPTSPTPTLPKAPSS), 425 to 455 (VGKKKENVKPASADPIARSSKSKVTKSTINP), and 492 to 528 (DQKQYDGKHKPGLEDLDEAQDNDTASQLSLKSNEDSR). Positions 180–196 (MHADLDSSDCDNDKQEV) are enriched in basic and acidic residues. The span at 494–504 (KQYDGKHKPGL) shows a compositional bias: basic and acidic residues. Positions 513 to 522 (NDTASQLSLK) are enriched in polar residues. Residues 732 to 1131 (LESQNQAWEH…AVIRQQRKDY (400 aa)) are a coiled coil.

Belongs to the CEP131 family. In terms of tissue distribution, expressed in chordotonal (Ch) neuronal precursors. Expressed in ciliated cells, like sensory neurons and spermatids.

Its subcellular location is the cytoplasm. It is found in the cytoskeleton. The protein resides in the microtubule organizing center. It localises to the centrosome. The protein localises to the cilium basal body. Its subcellular location is the centriole. Functionally, cilium-specific protein with a role in cilium/flagellum formation. May be involved in transport of components into the growing cilium. In germ cells and sensory neurons, plays a role with Cby in the building of the transition zone necessary for the formation of the ciliary cap and for the correct elongation of the axoneme. In Drosophila melanogaster (Fruit fly), this protein is Centrosomal protein of 131 kDa.